Reading from the N-terminus, the 776-residue chain is DNA ligase (776 aa).

Residues 31 to 35 (DAEYD), 80 to 81 (SL), and Glu-112 each bind NAD(+). Lys-114 (N6-AMP-lysine intermediate) is an active-site residue. Positions 135, 172, 288, and 312 each coordinate NAD(+). The Zn(2+) site is built by Cys-406, Cys-409, Cys-436, and Cys-442. In terms of domain architecture, BRCT spans 693–776 (AEGLPLAGQT…VFLDEQGIAI (84 aa)).

This sequence belongs to the NAD-dependent DNA ligase family. LigA subfamily. The cofactor is Mg(2+). Mn(2+) serves as cofactor.

It carries out the reaction NAD(+) + (deoxyribonucleotide)n-3'-hydroxyl + 5'-phospho-(deoxyribonucleotide)m = (deoxyribonucleotide)n+m + AMP + beta-nicotinamide D-nucleotide.. Its function is as follows. DNA ligase that catalyzes the formation of phosphodiester linkages between 5'-phosphoryl and 3'-hydroxyl groups in double-stranded DNA using NAD as a coenzyme and as the energy source for the reaction. It is essential for DNA replication and repair of damaged DNA. This Pseudomonas putida (strain W619) protein is DNA ligase.